We begin with the raw amino-acid sequence, 113 residues long: uncharacterized protein (113 aa).

The protein resides in the cytoplasm. It is found in the nucleus. This is an uncharacterized protein from Saccharomyces cerevisiae (strain ATCC 204508 / S288c) (Baker's yeast).